Reading from the N-terminus, the 282-residue chain is Shikimate dehydrogenase (NADP(+)) (282 aa).

Shikimate is bound by residues 15-17 (SKS) and threonine 62. The active-site Proton acceptor is the lysine 66. Asparagine 87 and aspartate 103 together coordinate shikimate. NADP(+) contacts are provided by residues 127-131 (GAGGA), 151-156 (NRTHTK), and methionine 220. Residue tyrosine 222 coordinates shikimate. Residue glycine 244 coordinates NADP(+).

Belongs to the shikimate dehydrogenase family. In terms of assembly, homodimer.

It catalyses the reaction shikimate + NADP(+) = 3-dehydroshikimate + NADPH + H(+). It functions in the pathway metabolic intermediate biosynthesis; chorismate biosynthesis; chorismate from D-erythrose 4-phosphate and phosphoenolpyruvate: step 4/7. Functionally, involved in the biosynthesis of the chorismate, which leads to the biosynthesis of aromatic amino acids. Catalyzes the reversible NADPH linked reduction of 3-dehydroshikimate (DHSA) to yield shikimate (SA). This chain is Shikimate dehydrogenase (NADP(+)), found in Shewanella baltica (strain OS185).